We begin with the raw amino-acid sequence, 430 residues long: Threonine synthase (430 aa).

N6-(pyridoxal phosphate)lysine is present on Lys108.

This sequence belongs to the threonine synthase family. The cofactor is pyridoxal 5'-phosphate.

The enzyme catalyses O-phospho-L-homoserine + H2O = L-threonine + phosphate. It functions in the pathway amino-acid biosynthesis; L-threonine biosynthesis; L-threonine from L-aspartate: step 5/5. Functionally, catalyzes the gamma-elimination of phosphate from L-phosphohomoserine and the beta-addition of water to produce L-threonine. The polypeptide is Threonine synthase (thrC) (Buchnera aphidicola subsp. Baizongia pistaciae (strain Bp)).